The sequence spans 272 residues: MQWNVPRTVSRLARRTCLEPHNAGLFGHCQNVKGPLLLYNAESKVVLVQGPQKQWLHLSAAQCVAKERRPLDAHPPQPGVLRHKQGKQHVSFRRVFSSSATAQGTPEKKEEPDPLQDKSISLYQRFKKTFRQYGKVLIPVHLITSGVWFGTFYYAALKGVNVVPFLELIGLPDSVVSILKNSQSGNALTAYALFKIATPARYTVTLGGTSVTVKYLRSHGYMSTPPPVKEYLQDRMEETKELITEKMEETKDRLTEKLQETKEKVSFKKKVE.

The region spanning 117 to 229 (DKSISLYQRF…GYMSTPPPVK (113 aa)) is the DUF1279 domain. Residues 136–156 (VLIPVHLITSGVWFGTFYYAA) form a helical membrane-spanning segment. The stretch at 229–271 (KEYLQDRMEETKELITEKMEETKDRLTEKLQETKEKVSFKKKV) forms a coiled coil. The disordered stretch occupies residues 246-272 (KMEETKDRLTEKLQETKEKVSFKKKVE).

It belongs to the FAM210 family. As to quaternary structure, interacts with ATAD3A.

The protein localises to the membrane. The protein resides in the mitochondrion. Its subcellular location is the cytoplasm. Functionally, may play a role in the structure and strength of both muscle and bone. The polypeptide is Protein FAM210A (FAM210A) (Homo sapiens (Human)).